The chain runs to 39 residues: Hementin (39 aa).

The cofactor is a divalent metal cation. Expressed mainly in the posterior salivary glands and, to a lesser extent, in the anterior salivary glands and secreted into the proboscis (at protein level).

Its subcellular location is the secreted. With respect to regulation, inhibited by EDTA, cysteine, DTT and sodium phosphate. Partially inhibited by EGTA, citrate, Tris and glycine. Not inhibited by DFP, PMSF, iodoacetic acid and leupeptin. Requires sodium chloride concentrations higher than 0.15 M for activity. Its function is as follows. Metalloprotease with anticoagulant activity. Cleaves fibrinogen Aalpha (FGA), gamma (FGG) and Bbeta (FGB) chains after positions 'Asn-121', 'Lys-160' and 'Pro-102', respectively. Breaks down cross-linked and non-cross-linked fibrin clots. Prevents and reverts platelet aggregation induced by ADP and collagen. Prevents thrombin-induced platelet clotting. Does not affect plasma levels of coagulation factors prothrombin (F2), V (F5), VII (F7), VIII (F8), IX (F9), X (F10), XI (F11), XII (F12), plasma kallikrein (KLKB1) and kininogen-1 (KNG1). The chain is Hementin from Haementeria ghilianii (Amazon leech).